The sequence spans 327 residues: GMP reductase (327 aa).

The active-site Thioimidate intermediate is the C175. 204 to 227 (IIADGGIRTHGDIAKSIRFGASMV) is an NADP(+) binding site.

Belongs to the IMPDH/GMPR family. GuaC type 2 subfamily.

It catalyses the reaction IMP + NH4(+) + NADP(+) = GMP + NADPH + 2 H(+). Functionally, catalyzes the irreversible NADPH-dependent deamination of GMP to IMP. It functions in the conversion of nucleobase, nucleoside and nucleotide derivatives of G to A nucleotides, and in maintaining the intracellular balance of A and G nucleotides. This is GMP reductase from Oceanobacillus iheyensis (strain DSM 14371 / CIP 107618 / JCM 11309 / KCTC 3954 / HTE831).